Consider the following 192-residue polypeptide: uncharacterized protein (192 aa).

To A.aeolicus AQ_054.

This is an uncharacterized protein from Thermotoga maritima (strain ATCC 43589 / DSM 3109 / JCM 10099 / NBRC 100826 / MSB8).